Consider the following 134-residue polypeptide: MNALAQKTPSPPTLVFTEAAVRKVKGLIDEENNPYLNLRVFITGGGCSGFQYGFTFDEAINSDDLVIEKQLEEEDDDEGGTGQMALVKLLVDPLSLQYLQGAEIDYREDVSGAQFVIRNPNAKTTCGCGSSFAA.

Positions 47, 126, and 128 each coordinate iron-sulfur cluster.

Belongs to the HesB/IscA family. As to quaternary structure, homodimer. Requires iron-sulfur cluster as cofactor.

Functionally, required for insertion of 4Fe-4S clusters for at least IspG. In Coxiella burnetii (strain RSA 331 / Henzerling II), this protein is Iron-sulfur cluster insertion protein ErpA.